Consider the following 763-residue polypeptide: Hormone-sensitive lipase (763 aa).

The Involved in the stabilization of the negatively charged intermediate by the formation of the oxyanion hole signature appears at 350–352 (HGG). Residue serine 424 is part of the active site. Position 552 is a phosphoserine (serine 552). Serine 554 carries the phosphoserine; by AMPK modification. Serine 595, serine 627, and serine 649 each carry phosphoserine. Basic and acidic residues predominate over residues 616-627 (AREEAEAKEGLS). The segment at 616-652 (AREEAEAKEGLSAKDGSSRVSNAFPEGFHPRRTSQGA) is disordered. Catalysis depends on residues aspartate 692 and histidine 722.

This sequence belongs to the 'GDXG' lipolytic enzyme family. In terms of assembly, monomer and homodimer. Interacts with CAVIN1 in the adipocyte cytoplasm. Interacts with PLIN5. Phosphorylation by AMPK reduces its translocation towards the lipid droplets.

It localises to the cell membrane. It is found in the membrane. The protein localises to the caveola. The protein resides in the cytoplasm. Its subcellular location is the cytosol. It localises to the lipid droplet. It catalyses the reaction a diacylglycerol + H2O = a monoacylglycerol + a fatty acid + H(+). The enzyme catalyses a triacylglycerol + H2O = a diacylglycerol + a fatty acid + H(+). It carries out the reaction a monoacylglycerol + H2O = glycerol + a fatty acid + H(+). The catalysed reaction is Hydrolyzes glycerol monoesters of long-chain fatty acids.. It catalyses the reaction 1,2-di-(9Z-octadecenoyl)-glycerol + (9Z)-octadecenoate + H(+) = 1,2,3-tri-(9Z-octadecenoyl)-glycerol + H2O. The enzyme catalyses 2,3-di-(9Z)-octadecenoyl-sn-glycerol + H2O = 2-(9Z-octadecenoyl)-glycerol + (9Z)-octadecenoate + H(+). It carries out the reaction cholesteryl (9Z-octadecenoate) + H2O = cholesterol + (9Z)-octadecenoate + H(+). The catalysed reaction is 1,2,3-tri-(9Z-octadecenoyl)-glycerol + H2O = di-(9Z)-octadecenoylglycerol + (9Z)-octadecenoate + H(+). It catalyses the reaction all-trans-retinyl hexadecanoate + H2O = all-trans-retinol + hexadecanoate + H(+). The enzyme catalyses 1,2-di-(9Z-octadecenoyl)-glycerol + H2O = (9Z-octadecenoyl)-glycerol + (9Z)-octadecenoate + H(+). It carries out the reaction 2-(5Z,8Z,11Z,14Z-eicosatetraenoyl)-glycerol + H2O = glycerol + (5Z,8Z,11Z,14Z)-eicosatetraenoate + H(+). The catalysed reaction is 1-(9Z-octadecenoyl)-glycerol + H2O = glycerol + (9Z)-octadecenoate + H(+). It catalyses the reaction 2-(9Z-octadecenoyl)-glycerol + H2O = glycerol + (9Z)-octadecenoate + H(+). The enzyme catalyses 1-O-hexadecyl-2-acetyl-sn-glycerol + H2O = 1-O-hexadecyl-sn-glycerol + acetate + H(+). It carries out the reaction 1,2-di-(9Z-octadecenoyl)-sn-glycerol + H2O = (9Z-octadecenoyl)-glycerol + (9Z)-octadecenoate + H(+). The catalysed reaction is 1,3-di-(9Z-octadecenoyl)-glycerol + H2O = 1-(9Z-octadecenoyl)-glycerol + (9Z)-octadecenoate + H(+). It catalyses the reaction 1,2-di-(9Z-octadecenoyl)-glycerol + H2O = 2-(9Z-octadecenoyl)-glycerol + (9Z)-octadecenoate + H(+). Its pathway is glycerolipid metabolism; triacylglycerol degradation. Lipase with broad substrate specificity, catalyzing the hydrolysis of triacylglycerols (TAGs), diacylglycerols (DAGs), monoacylglycerols (MAGs), cholesteryl esters and retinyl esters. Shows a preferential hydrolysis of DAGs over TAGs and MAGs. Preferentially hydrolyzes fatty acid (FA) esters at the sn-3 position of the glycerol backbone in DAGs and FA esters at the sn-1 and sn-2 positions of the glycerol backbone in TAGs. Catalyzes the hydrolysis of 2-arachidonoylglycerol, an endocannabinoid and of 2-acetyl monoalkylglycerol ether, the penultimate precursor of the pathway for de novo synthesis of platelet-activating factor. In adipose tissue and heart, it primarily hydrolyzes stored triglycerides to free fatty acids, while in steroidogenic tissues, it principally converts cholesteryl esters to free cholesterol for steroid hormone production. In Ictidomys tridecemlineatus (Thirteen-lined ground squirrel), this protein is Hormone-sensitive lipase (LIPE).